The following is a 418-amino-acid chain: UDP-N-acetylglucosamine 1-carboxyvinyltransferase (418 aa).

A phosphoenolpyruvate-binding site is contributed by 22–23 (KN). Residue arginine 92 coordinates UDP-N-acetyl-alpha-D-glucosamine. The active-site Proton donor is the cysteine 116. A 2-(S-cysteinyl)pyruvic acid O-phosphothioketal modification is found at cysteine 116. UDP-N-acetyl-alpha-D-glucosamine contacts are provided by residues 121-125 (RPIDL), aspartate 305, and leucine 327.

The protein belongs to the EPSP synthase family. MurA subfamily.

Its subcellular location is the cytoplasm. It carries out the reaction phosphoenolpyruvate + UDP-N-acetyl-alpha-D-glucosamine = UDP-N-acetyl-3-O-(1-carboxyvinyl)-alpha-D-glucosamine + phosphate. The protein operates within cell wall biogenesis; peptidoglycan biosynthesis. Cell wall formation. Adds enolpyruvyl to UDP-N-acetylglucosamine. This chain is UDP-N-acetylglucosamine 1-carboxyvinyltransferase, found in Campylobacter jejuni subsp. jejuni serotype O:6 (strain 81116 / NCTC 11828).